The chain runs to 140 residues: Large ribosomal subunit protein uL11 (140 aa).

The protein belongs to the universal ribosomal protein uL11 family. Part of the ribosomal stalk of the 50S ribosomal subunit. Interacts with L10 and the large rRNA to form the base of the stalk. L10 forms an elongated spine to which L12 dimers bind in a sequential fashion forming a multimeric L10(L12)X complex. One or more lysine residues are methylated.

Forms part of the ribosomal stalk which helps the ribosome interact with GTP-bound translation factors. This chain is Large ribosomal subunit protein uL11, found in Staphylococcus aureus (strain bovine RF122 / ET3-1).